We begin with the raw amino-acid sequence, 460 residues long: Probable amino acid transporter skat-1 (460 aa).

10 helical membrane-spanning segments follow: residues 64–84 (LGGL…NWYG), 132–152 (FVNV…ILFI), 172–192 (MILM…FTEM), 194–214 (IVSF…AVIM), 236–256 (TITM…ILPI), 270–290 (FGVL…LGFF), 316–336 (VNVF…YVVY), 362–382 (GFRV…PKLE), 383–403 (IMIP…FPPF), and 426–446 (IFIN…GVYT).

Belongs to the amino acid/polyamine transporter 2 family. As to expression, expressed in the head, tail, body and ventral nerve cord neurons, muscles of the vulva, and intestine.

It is found in the membrane. The protein resides in the cytoplasmic granule. Functionally, plays a role in the accumulation of vital dyes and endogenous fluorescent compounds in lysosome related organelles. Has an effect on lysosome related organelle (LRO) function, in a pathway with serotonin. This Caenorhabditis elegans protein is Probable amino acid transporter skat-1.